A 396-amino-acid chain; its full sequence is Aspartate aminotransferase (396 aa).

3 residues coordinate L-aspartate: glycine 34, tryptophan 130, and asparagine 183. Residue lysine 246 is modified to N6-(pyridoxal phosphate)lysine. Arginine 374 provides a ligand contact to L-aspartate.

The protein belongs to the class-I pyridoxal-phosphate-dependent aminotransferase family. In terms of assembly, homodimer. Requires pyridoxal 5'-phosphate as cofactor.

The protein localises to the cytoplasm. The enzyme catalyses L-aspartate + 2-oxoglutarate = oxaloacetate + L-glutamate. The chain is Aspartate aminotransferase (aspC) from Escherichia coli (strain K12).